We begin with the raw amino-acid sequence, 442 residues long: MPKIFRSLYVQVLIAIVLGILVGFLFPSFGEGLKPLGDGFIKLIKMLIAPIIFATVVSGIAHMRDTKKVGRVGGKALIYFEVVTTFALVIGLVVANILKPGHGMNVNPATLDTSAISKYTQAAGEQSVADFLLHIIPNTLVSAFTEGDLLQVLLISVLFGFALTQLGTLGQKVLAGIEAVNSAVFVILGFVMRLAPIGAFGAMAFTIGKYGVGTLAQLAYLMVAFYATCLLFVFVVLGLIARFAGFSILKFIRFIKEELLLVLGTSSSESALPRLITKLEYAGANRSVVGLVVPAGYSFNLDGTSIYLTMATLFIAQATNTHLSLGQQLGILGVLLLTSKGAAGVTGSGFITLAATLSAVGHVPVAGLALILGIDRFMSEARALTNFVGNGVATLVIARSEKALDTNRLQRVLNGEVLPPATPEVAAEERGEGRGLDGPLPA.

A run of 8 helical transmembrane segments spans residues 10 to 30 (VQVL…PSFG), 40 to 60 (FIKL…VSGI), 77 to 97 (LIYF…VANI), 149 to 169 (LLQV…LGTL), 185 to 205 (FVIL…AMAF), 221 to 241 (LMVA…GLIA), 288 to 308 (VVGL…SIYL), and 354 to 374 (AATL…ILGI). A disordered region spans residues 420–442 (PATPEVAAEERGEGRGLDGPLPA).

Belongs to the dicarboxylate/amino acid:cation symporter (DAACS) (TC 2.A.23) family.

The protein resides in the cell membrane. In terms of biological role, responsible for the transport of dicarboxylates such as succinate, fumarate, and malate across the membrane. The polypeptide is C4-dicarboxylate transport protein (Deinococcus geothermalis (strain DSM 11300 / CIP 105573 / AG-3a)).